Consider the following 558-residue polypeptide: Serine/threonine-protein phosphatase 2B catalytic subunit (558 aa).

The Fe cation site is built by D128, H130, and D156. 2 residues coordinate Zn(2+): D156 and N188. The Proton donor role is filled by H189. Zn(2+) contacts are provided by H237 and H319. Disordered stretches follow at residues 415–439 and 534–558; these read LRED…NQDP and ALER…LSTS. The segment covering 420–435 has biased composition (low complexity); it reads ATTSPGSASPALPSAA. Over residues 534 to 548 the composition is skewed to basic and acidic residues; that stretch reads ALERATREADNDKKL. A compositionally biased stretch (polar residues) spans 549–558; the sequence is QTLSRRLSTS.

This sequence belongs to the PPP phosphatase family. PP-2B subfamily. As to quaternary structure, composed of two components (A and B), the A component is the catalytic subunit and the B component confers calcium sensitivity. The cofactor is Fe(3+). Zn(2+) serves as cofactor.

The enzyme catalyses O-phospho-L-seryl-[protein] + H2O = L-seryl-[protein] + phosphate. It carries out the reaction O-phospho-L-threonyl-[protein] + H2O = L-threonyl-[protein] + phosphate. Calcium-dependent, calmodulin-stimulated protein phosphatase. This subunit may have a role in the calmodulin activation of calcineurin. The polypeptide is Serine/threonine-protein phosphatase 2B catalytic subunit (cna-1) (Neurospora crassa (strain ATCC 24698 / 74-OR23-1A / CBS 708.71 / DSM 1257 / FGSC 987)).